A 130-amino-acid chain; its full sequence is Small ribosomal subunit protein uS8 (130 aa).

The protein belongs to the universal ribosomal protein uS8 family. Part of the 30S ribosomal subunit. Contacts proteins S5 and S12.

One of the primary rRNA binding proteins, it binds directly to 16S rRNA central domain where it helps coordinate assembly of the platform of the 30S subunit. This chain is Small ribosomal subunit protein uS8, found in Klebsiella pneumoniae subsp. pneumoniae (strain ATCC 700721 / MGH 78578).